Consider the following 131-residue polypeptide: Type 3 secretion system pilotin (131 aa).

A signal peptide spans 1–15 (MSRIIALIISFLLVG). Residue C16 is the site of N-palmitoyl cysteine attachment. C16 is lipidated: S-diacylglycerol cysteine.

This sequence belongs to the ExsB/YscW family. Interacts with YscC/SctC.

It localises to the cell outer membrane. Functionally, involved in the synthesis of the type III secretion system (T3SS), also called injectisome, which is used to inject bacterial effector proteins into eukaryotic host cells. Pilot protein that is required for the proper localization of the secretin YscC/SctC in the outer membrane. Also required for efficient oligomerization of YscC/SctC and stabilization of the oligomers. This is Type 3 secretion system pilotin from Yersinia enterocolitica.